The primary structure comprises 490 residues: Glutamyl-tRNA(Gln) amidotransferase subunit A (490 aa).

Active-site charge relay system residues include Lys78 and Ser158. Residue Ser182 is the Acyl-ester intermediate of the active site.

It belongs to the amidase family. GatA subfamily. Heterotrimer of A, B and C subunits.

It carries out the reaction L-glutamyl-tRNA(Gln) + L-glutamine + ATP + H2O = L-glutaminyl-tRNA(Gln) + L-glutamate + ADP + phosphate + H(+). Functionally, allows the formation of correctly charged Gln-tRNA(Gln) through the transamidation of misacylated Glu-tRNA(Gln) in organisms which lack glutaminyl-tRNA synthetase. The reaction takes place in the presence of glutamine and ATP through an activated gamma-phospho-Glu-tRNA(Gln). This is Glutamyl-tRNA(Gln) amidotransferase subunit A from Caulobacter sp. (strain K31).